The chain runs to 754 residues: Phosphatase and actin regulator 4B (754 aa).

Residues 1-12 show a composition bias toward basic and acidic residues; it reads MENRDDEVEHQH. 4 disordered regions span residues 1–38, 83–105, 120–625, and 637–666; these read MENR…FSTL, KELP…KNGH, VHSP…SKEQ, and LTRR…DRQA. Residues 61–86 form an RPEL 1 repeat; the sequence is EVLERKMSMRRPRQELIEQGVLKELP. Basic and acidic residues-rich tracts occupy residues 138–153, 184–221, and 229–241; these read PEDR…DHRG, HGED…EPDW, and SSVE…RESD. 2 stretches are compositionally biased toward low complexity: residues 296 to 307 and 316 to 333; these read SFCSSNSSSSSS and SSAG…LTTS. Composition is skewed to pro residues over residues 348–357, 381–390, 427–445, and 460–478; these read KQPPMPPPKP, KPSPPMPPKR, LPPP…PSPP, and YPLP…PPED. 3 stretches are compositionally biased toward acidic residues: residues 483 to 503, 541 to 557, and 566 to 576; these read DEDD…DEEP, SEEE…ESDS, and DESDEDEEDDS. The span at 605-615 shows a compositional bias: basic and acidic residues; that stretch reads QAPERQAKSEH. RPEL repeat units lie at residues 635–660 and 673–698; these read TALT…QPKN and RRLT…RFHE. Ser-642 is subject to Phosphoserine.

This sequence belongs to the phosphatase and actin regulator family. As to quaternary structure, binds ppp1ca and actin.

Its subcellular location is the cytoplasm. It is found in the cell projection. The protein resides in the lamellipodium. In terms of biological role, regulator of protein phosphatase 1 (PP1) required for neural tube and optic fissure closure, and enteric neural crest cell (ENCCs) migration during development. Acts as an activator of PP1. During neural tube closure, localizes to the ventral neural tube and activates PP1, leading to down-regulate cell proliferation within cranial neural tissue and the neural retina. Also acts as a regulator of migration of enteric neural crest cells (ENCCs) by activating PP1, leading to repression of the integrin signaling through the rho/rock pathway. The polypeptide is Phosphatase and actin regulator 4B (phactr4b) (Danio rerio (Zebrafish)).